We begin with the raw amino-acid sequence, 258 residues long: DNA repair protein RecO (258 aa).

It belongs to the RecO family.

Involved in DNA repair and RecF pathway recombination. In Desulfatibacillum aliphaticivorans, this protein is DNA repair protein RecO.